The sequence spans 247 residues: Tyrosine recombinase XerD-like (247 aa).

The 72-residue stretch at 1–72 (MIKHIEAFLA…TVNQFLHYLY (72 aa)) folds into the Core-binding (CB) domain. The Tyr recombinase domain occupies 91–247 (STKVPFTYQL…PITLEKYYRL (157 aa)). The active site involves Arg212. The active-site O-(3'-phospho-DNA)-tyrosine intermediate is the Tyr244.

The protein belongs to the 'phage' integrase family. XerD-like subfamily.

It localises to the cytoplasm. Its function is as follows. Putative tyrosine recombinase. Not involved in the cutting and rejoining of the recombining DNA molecules on dif(SL) site. This is Tyrosine recombinase XerD-like from Streptococcus uberis (strain ATCC BAA-854 / 0140J).